Here is a 353-residue protein sequence, read N- to C-terminus: S-adenosylmethionine:tRNA ribosyltransferase-isomerase (353 aa).

It belongs to the QueA family. Monomer.

The protein localises to the cytoplasm. The enzyme catalyses 7-aminomethyl-7-carbaguanosine(34) in tRNA + S-adenosyl-L-methionine = epoxyqueuosine(34) in tRNA + adenine + L-methionine + 2 H(+). It functions in the pathway tRNA modification; tRNA-queuosine biosynthesis. Its function is as follows. Transfers and isomerizes the ribose moiety from AdoMet to the 7-aminomethyl group of 7-deazaguanine (preQ1-tRNA) to give epoxyqueuosine (oQ-tRNA). This chain is S-adenosylmethionine:tRNA ribosyltransferase-isomerase, found in Dinoroseobacter shibae (strain DSM 16493 / NCIMB 14021 / DFL 12).